Reading from the N-terminus, the 949-residue chain is MRTDSFALRHIGPKAENLQEMLDTIGVESIEQLIYETIPDDIRLDQPLNLPKAMSENQYAEHIKKLSEKNRVFKTYIGLGYHQAILPAVIQRNILENPGWYTAYTPYQAEIAQGRLEALLNFQTMVSDLTGMEIANASLLDESTAAAEAMALLHAVRDRKQKKDDVNKFFVSQQTLPQTISLMETRANFLGIDMVVGDHEEFDFSEEYFGALVQYPGKFGQIFDYANFVENCKNANIKTAFAADILSLVKLQAPGELGVDVVVGTTQRFGIPLGYGGPHAAYFATKEEYKRNLPGRIIGLTKDLDGNNALRMALQTREQHIKRDKATSNICTAQVLLAVMAGMYAVYHGPKGLEYIANIVHASAVSLEDSLKELGFEQLNSAYFDTIHVKANASKLKAIAEKHEINFFYPDAESACISINETTTTDDLNAVIAVFAELSEKKHAEIEELSERTAIPKNLERKTEFLTHEVFNLYHSETELMRYIKKLERKDLSLNHSMISLGSCTMKLNAASEMLPLSNPQWGNMHPFAPVNQAEGYQTVLKELEHQLTEITGFSATSLQPNSGAQGEYAGLMVIRAYHEANGEGHRNVCLIPSSAHGTNPASAVMAGMKVVVTKASENGNIDVDDLREKAIKHKDNLAALMVTYPSTHGVFESAIREITNIIHENGGQVYMDGANMNAQVGLTNPGRIGADVCHLNLHKTFAIPHGGGGPGVGPICVAEQLKPFLPGNPVIKTGGEKAIGAISSAPWGSSLVCLISYGYIKMLGTGGLQQATEYAILNANYIKARLNDHYKTLYSGERGRAAHEMIIDCRPFKEQGIEVTDIAKRLIDYGFHSPTVSFPVAGTMMIEPTESESKPELDRFCDALISIRKEIDEVSVDDSNNVLKNAPHTIHMLTSDEWKLPYSREKAAYPLDHLHDNKFWPSVRRVDEAFGDRNLMCTCPPTEEYAEA.

Position 700 is an N6-(pyridoxal phosphate)lysine (Lys-700).

The protein belongs to the GcvP family. In terms of assembly, the glycine cleavage system is composed of four proteins: P, T, L and H. Pyridoxal 5'-phosphate serves as cofactor.

It carries out the reaction N(6)-[(R)-lipoyl]-L-lysyl-[glycine-cleavage complex H protein] + glycine + H(+) = N(6)-[(R)-S(8)-aminomethyldihydrolipoyl]-L-lysyl-[glycine-cleavage complex H protein] + CO2. Its function is as follows. The glycine cleavage system catalyzes the degradation of glycine. The P protein binds the alpha-amino group of glycine through its pyridoxal phosphate cofactor; CO(2) is released and the remaining methylamine moiety is then transferred to the lipoamide cofactor of the H protein. This Christiangramia forsetii (strain DSM 17595 / CGMCC 1.15422 / KT0803) (Gramella forsetii) protein is Glycine dehydrogenase (decarboxylating).